The following is a 522-amino-acid chain: Peptide methionine sulfoxide reductase MsrA/MsrB (522 aa).

The Thioredoxin domain maps to 17–174 (LALGACSPKI…ALALIRDPNA (158 aa)). The cysteines at positions 68 and 71 are disulfide-linked. Positions 199-354 (RTIYLAGGCF…PNGYCHIDIR (156 aa)) are peptide methionine sulfoxide reductase A. The active site involves Cys-207. The MsrB domain maps to 383–506 (DAELKRTLTE…NGASLKFIPL (124 aa)). Cys-440 and Cys-495 are joined by a disulfide. Catalysis depends on Cys-495, which acts as the Nucleophile.

In the N-terminal section; belongs to the thioredoxin family. It in the central section; belongs to the MsrA Met sulfoxide reductase family. The protein in the C-terminal section; belongs to the MsrB Met sulfoxide reductase family.

It catalyses the reaction L-methionyl-[protein] + [thioredoxin]-disulfide + H2O = L-methionyl-(S)-S-oxide-[protein] + [thioredoxin]-dithiol. It carries out the reaction [thioredoxin]-disulfide + L-methionine + H2O = L-methionine (S)-S-oxide + [thioredoxin]-dithiol. The enzyme catalyses L-methionyl-[protein] + [thioredoxin]-disulfide + H2O = L-methionyl-(R)-S-oxide-[protein] + [thioredoxin]-dithiol. Has an important function as a repair enzyme for proteins that have been inactivated by oxidation. Catalyzes the reversible oxidation-reduction of methionine sulfoxide in proteins to methionine. This is Peptide methionine sulfoxide reductase MsrA/MsrB (msrAB) from Neisseria meningitidis serogroup A / serotype 4A (strain DSM 15465 / Z2491).